Consider the following 109-residue polypeptide: Large ribosomal subunit protein uL22 (109 aa).

The protein belongs to the universal ribosomal protein uL22 family. As to quaternary structure, part of the 50S ribosomal subunit.

Its function is as follows. This protein binds specifically to 23S rRNA; its binding is stimulated by other ribosomal proteins, e.g. L4, L17, and L20. It is important during the early stages of 50S assembly. It makes multiple contacts with different domains of the 23S rRNA in the assembled 50S subunit and ribosome. Functionally, the globular domain of the protein is located near the polypeptide exit tunnel on the outside of the subunit, while an extended beta-hairpin is found that lines the wall of the exit tunnel in the center of the 70S ribosome. This Psychrobacter sp. (strain PRwf-1) protein is Large ribosomal subunit protein uL22.